Reading from the N-terminus, the 578-residue chain is Zinc finger protein 248 (578 aa).

The KRAB domain maps to 8–78 (VSFKDVCVDF…LEKGFPSQDP (71 aa)). The C2H2-type 1; degenerate zinc-finger motif lies at 239-263 (TVCKYNECGRTFIESLKLNISQRPH). Lysine 340 is covalently cross-linked (Glycyl lysine isopeptide (Lys-Gly) (interchain with G-Cter in SUMO2)). C2H2-type zinc fingers lie at residues 379–401 (FECG…QRTH), 407–429 (YECT…QRTH), 435–457 (YECK…QRTH), 463–485 (YECN…QRTH), 491–513 (FICN…QRTH), 519–542 (YKCN…RTHT), and 547–569 (YECN…QRIH).

Belongs to the krueppel C2H2-type zinc-finger protein family.

Its subcellular location is the nucleus. Functionally, may be involved in transcriptional regulation. The sequence is that of Zinc finger protein 248 (ZNF248) from Pongo abelii (Sumatran orangutan).